Here is a 474-residue protein sequence, read N- to C-terminus: tRNA modification GTPase MnmE (474 aa).

3 residues coordinate (6S)-5-formyl-5,6,7,8-tetrahydrofolate: arginine 23, glutamate 86, and lysine 125. A TrmE-type G domain is found at 221–396 (GIPVAIVGEP…LKEKLLEYVN (176 aa)). Position 231 (asparagine 231) interacts with K(+). Residues 231–236 (NVGKST), 250–256 (SEIAGTT), and 275–278 (DTAG) contribute to the GTP site. Serine 235 contributes to the Mg(2+) binding site. Residues serine 250, isoleucine 252, and threonine 255 each coordinate K(+). Threonine 256 contributes to the Mg(2+) binding site. Lysine 474 is a (6S)-5-formyl-5,6,7,8-tetrahydrofolate binding site.

Belongs to the TRAFAC class TrmE-Era-EngA-EngB-Septin-like GTPase superfamily. TrmE GTPase family. In terms of assembly, homodimer. Heterotetramer of two MnmE and two MnmG subunits. K(+) serves as cofactor.

The protein resides in the cytoplasm. In terms of biological role, exhibits a very high intrinsic GTPase hydrolysis rate. Involved in the addition of a carboxymethylaminomethyl (cmnm) group at the wobble position (U34) of certain tRNAs, forming tRNA-cmnm(5)s(2)U34. The protein is tRNA modification GTPase MnmE of Christiangramia forsetii (strain DSM 17595 / CGMCC 1.15422 / KT0803) (Gramella forsetii).